We begin with the raw amino-acid sequence, 179 residues long: uncharacterized protein (179 aa).

This is an uncharacterized protein from Methanocaldococcus jannaschii (strain ATCC 43067 / DSM 2661 / JAL-1 / JCM 10045 / NBRC 100440) (Methanococcus jannaschii).